We begin with the raw amino-acid sequence, 397 residues long: Glutamate 5-kinase (397 aa).

Residues 1–28 (MVADLTSDISESQEQETETNSANNNGAV) form a disordered region. Lys40 lines the ATP pocket. The substrate site is built by Ser80, Asp168, and Asn180. ATP is bound by residues 200–201 (SD) and 243–249 (SGGMASK). Residues 306–383 (HGQVYIDQGA…QEIADILGYE (78 aa)) enclose the PUA domain.

Belongs to the glutamate 5-kinase family.

It is found in the cytoplasm. It catalyses the reaction L-glutamate + ATP = L-glutamyl 5-phosphate + ADP. It functions in the pathway amino-acid biosynthesis; L-proline biosynthesis; L-glutamate 5-semialdehyde from L-glutamate: step 1/2. Catalyzes the transfer of a phosphate group to glutamate to form L-glutamate 5-phosphate. The polypeptide is Glutamate 5-kinase (Zymomonas mobilis subsp. mobilis (strain ATCC 31821 / ZM4 / CP4)).